The sequence spans 209 residues: Small ribosomal subunit protein uS3 (209 aa).

The 70-residue stretch at isoleucine 38–lysine 107 folds into the KH type-2 domain.

It belongs to the universal ribosomal protein uS3 family. As to quaternary structure, part of the 30S ribosomal subunit. Forms a tight complex with proteins S10 and S14.

Functionally, binds the lower part of the 30S subunit head. Binds mRNA in the 70S ribosome, positioning it for translation. This chain is Small ribosomal subunit protein uS3, found in Fervidobacterium nodosum (strain ATCC 35602 / DSM 5306 / Rt17-B1).